Reading from the N-terminus, the 555-residue chain is Formate--tetrahydrofolate ligase (555 aa).

Residue 64–71 (TPAGEGKT) participates in ATP binding.

This sequence belongs to the formate--tetrahydrofolate ligase family.

The catalysed reaction is (6S)-5,6,7,8-tetrahydrofolate + formate + ATP = (6R)-10-formyltetrahydrofolate + ADP + phosphate. Its pathway is one-carbon metabolism; tetrahydrofolate interconversion. The chain is Formate--tetrahydrofolate ligase from Dinoroseobacter shibae (strain DSM 16493 / NCIMB 14021 / DFL 12).